The chain runs to 52 residues: Large ribosomal subunit protein bL33 (52 aa).

The protein belongs to the bacterial ribosomal protein bL33 family.

The protein is Large ribosomal subunit protein bL33 of Chlamydia abortus (strain DSM 27085 / S26/3) (Chlamydophila abortus).